The chain runs to 100 residues: Small ribosomal subunit protein uS14 (100 aa).

The protein belongs to the universal ribosomal protein uS14 family. Part of the 30S ribosomal subunit. Contacts proteins S3 and S10.

Binds 16S rRNA, required for the assembly of 30S particles and may also be responsible for determining the conformation of the 16S rRNA at the A site. The chain is Small ribosomal subunit protein uS14 from Prochlorococcus marinus (strain MIT 9301).